Consider the following 401-residue polypeptide: ATP-dependent RNA helicase eIF4A (401 aa).

Residues 28–56 (DNFDDMKLKGELLRGIYAYGFERPSAIQQ) carry the Q motif motif. Positions 59–229 (IMPIVTGRDC…KKFMRDPIRI (171 aa)) constitute a Helicase ATP-binding domain. 72–79 (AQSGTGKT) is an ATP binding site. A DEAD box motif is present at residues 177–180 (DEAD). One can recognise a Helicase C-terminal domain in the interval 240-401 (GIRQFYINVE…EMPLNVADLI (162 aa)).

This sequence belongs to the DEAD box helicase family. eIF4A subfamily. Component of the eIF4F complex, which composition varies with external and internal environmental conditions. It is composed of at least eIF4A, eIF4E and eIF4G.

Its subcellular location is the cytoplasm. The catalysed reaction is ATP + H2O = ADP + phosphate + H(+). In terms of biological role, ATP-dependent RNA helicase which is a subunit of the eIF4F complex involved in cap recognition and is required for mRNA binding to ribosome. In the current model of translation initiation, eIF4A unwinds RNA secondary structures in the 5'-UTR of mRNAs which is necessary to allow efficient binding of the small ribosomal subunit, and subsequent scanning for the initiator codon. In Cryptococcus neoformans var. neoformans serotype D (strain B-3501A) (Filobasidiella neoformans), this protein is ATP-dependent RNA helicase eIF4A (TIF1).